Reading from the N-terminus, the 307-residue chain is Transcription factor MYB78 (307 aa).

HTH myb-type domains follow at residues 23-79 (EMDV…RPDV) and 80-130 (RRGN…QKHA). DNA-binding regions (H-T-H motif) lie at residues 51 to 75 (WNSL…LNYL) and 103 to 126 (WSKI…RTRV).

The protein resides in the nucleus. The protein is Transcription factor MYB78 of Arabidopsis thaliana (Mouse-ear cress).